The following is a 249-amino-acid chain: Tryptophan synthase alpha chain (249 aa).

Residues Glu-43 and Asp-54 each act as proton acceptor in the active site.

Belongs to the TrpA family. As to quaternary structure, tetramer of two alpha and two beta chains.

It carries out the reaction (1S,2R)-1-C-(indol-3-yl)glycerol 3-phosphate + L-serine = D-glyceraldehyde 3-phosphate + L-tryptophan + H2O. Its pathway is amino-acid biosynthesis; L-tryptophan biosynthesis; L-tryptophan from chorismate: step 5/5. The alpha subunit is responsible for the aldol cleavage of indoleglycerol phosphate to indole and glyceraldehyde 3-phosphate. The chain is Tryptophan synthase alpha chain from Campylobacter jejuni subsp. jejuni serotype O:23/36 (strain 81-176).